Consider the following 1049-residue polypeptide: RTX-III toxin determinant A from serotype 2 (1049 aa).

3 consecutive transmembrane segments (helical) span residues 154 to 170, 315 to 331, and 397 to 413; these read TIISGIQSVLGTVLAGI, ALIASSISLAISPLAFL, and LVGAPITLLVTGITGLI. Hemolysin-type calcium-binding repeat units follow at residues 743-760, 761-778, 779-796, 797-814, 825-842, and 843-860; these read KGSKFRDIFHGADGDDLL, NGNDGDDILYGDKGNDEL, RGDNGNDQLYGGEGDDKL, LGGNGNNYLSGGDGNDEL, RGGKGDDKLYGSSGSDLL, and DGGEGNDYLEGGDGSDFY.

This sequence belongs to the RTX prokaryotic toxin (TC 1.C.11) family. In terms of processing, palmitoylated by ApxIIIC. The toxin only becomes active when modified.

It is found in the secreted. The protein localises to the host cell membrane. In terms of biological role, does not have hemolytic activity but shows a strong cytotoxicity towards alveolar macrophages and neutrophils. The chain is RTX-III toxin determinant A from serotype 2 (apxIIIA) from Actinobacillus pleuropneumoniae (Haemophilus pleuropneumoniae).